The primary structure comprises 426 residues: Glutamate-1-semialdehyde 2,1-aminomutase (426 aa).

The residue at position 265 (lysine 265) is an N6-(pyridoxal phosphate)lysine.

It belongs to the class-III pyridoxal-phosphate-dependent aminotransferase family. HemL subfamily. In terms of assembly, homodimer. The cofactor is pyridoxal 5'-phosphate.

Its subcellular location is the cytoplasm. It catalyses the reaction (S)-4-amino-5-oxopentanoate = 5-aminolevulinate. The protein operates within porphyrin-containing compound metabolism; protoporphyrin-IX biosynthesis; 5-aminolevulinate from L-glutamyl-tRNA(Glu): step 2/2. The polypeptide is Glutamate-1-semialdehyde 2,1-aminomutase (Actinobacillus pleuropneumoniae serotype 7 (strain AP76)).